Here is a 376-residue protein sequence, read N- to C-terminus: Cytochrome c oxidase subunit 2, mitochondrial (376 aa).

Residues 164–184 (IFFFLVQILVFVLWVLSRALW) form a helical membrane-spanning segment. The Mitochondrial matrix segment spans residues 185-204 (CFRSKISPIPQRIVHGTTIE). Residues 205-225 (ILWTILPSIILMFIAIPSFTL) traverse the membrane as a helical segment. Residues 226–376 (LYSMDDVVVD…YGSWVSNQIQ (151 aa)) are Mitochondrial intermembrane-facing. Cu cation-binding residues include H309, C344, E346, C348, H352, and M355. E346 contributes to the Mg(2+) binding site.

The protein belongs to the cytochrome c oxidase subunit 2 family. As to quaternary structure, component of the cytochrome c oxidase (complex IV, CIV), a multisubunit enzyme composed of a catalytic core of 3 subunits and several supernumerary subunits. The complex exists as a monomer or a dimer and forms supercomplexes (SCs) in the inner mitochondrial membrane with ubiquinol-cytochrome c oxidoreductase (cytochrome b-c1 complex, complex III, CIII). Cu cation is required as a cofactor.

It localises to the mitochondrion inner membrane. The enzyme catalyses 4 Fe(II)-[cytochrome c] + O2 + 8 H(+)(in) = 4 Fe(III)-[cytochrome c] + 2 H2O + 4 H(+)(out). Its function is as follows. Component of the cytochrome c oxidase, the last enzyme in the mitochondrial electron transport chain which drives oxidative phosphorylation. The respiratory chain contains 3 multisubunit complexes succinate dehydrogenase (complex II, CII), ubiquinol-cytochrome c oxidoreductase (cytochrome b-c1 complex, complex III, CIII) and cytochrome c oxidase (complex IV, CIV), that cooperate to transfer electrons derived from NADH and succinate to molecular oxygen, creating an electrochemical gradient over the inner membrane that drives transmembrane transport and the ATP synthase. Cytochrome c oxidase is the component of the respiratory chain that catalyzes the reduction of oxygen to water. Electrons originating from reduced cytochrome c in the intermembrane space (IMS) are transferred via the dinuclear copper A center (CU(A)) of subunit 2 and heme A of subunit 1 to the active site in subunit 1, a binuclear center (BNC) formed by heme A3 and copper B (CU(B)). The BNC reduces molecular oxygen to 2 water molecules using 4 electrons from cytochrome c in the IMS and 4 protons from the mitochondrial matrix. In Vigna unguiculata (Cowpea), this protein is Cytochrome c oxidase subunit 2, mitochondrial (COX2).